Consider the following 275-residue polypeptide: Protein COFACTOR ASSEMBLY OF COMPLEX C SUBUNIT B CCB2, chloroplastic (275 aa).

The transit peptide at M1–R19 directs the protein to the chloroplast. Over A20–R65 the chain is Stromal. A helical transmembrane segment spans residues W66–I86. Over S87–S93 the chain is Lumenal. The chain crosses the membrane as a helical span at residues E94–L114. The Stromal segment spans residues K115–G275.

Its subcellular location is the plastid. The protein resides in the chloroplast thylakoid membrane. Functionally, required for the biogenesis and accumulation of native cytochrome b6 in the thylakoid membrane. Controls the conversion of apocytochrome b6 to holocytochrome b6. Required for covalent binding of the c-type heme to cytochrome b6. The sequence is that of Protein COFACTOR ASSEMBLY OF COMPLEX C SUBUNIT B CCB2, chloroplastic from Arabidopsis thaliana (Mouse-ear cress).